The following is a 361-amino-acid chain: Phospho-N-acetylmuramoyl-pentapeptide-transferase (361 aa).

10 helical membrane-spanning segments follow: residues 27–47 (GALF…ISLL), 72–92 (TPTM…FLWA), 99–119 (VWIT…DDYL), 139–159 (ALIA…GLAY), 169–189 (AIVN…VGAG), 200–220 (GLAI…AYLV), 240–260 (LAVV…FNAP), 264–284 (IFMG…VAVA), 289–309 (IVLA…IIQV), and 338–358 (QVVI…LATL).

It belongs to the glycosyltransferase 4 family. MraY subfamily. Mg(2+) serves as cofactor.

It is found in the cell inner membrane. It catalyses the reaction UDP-N-acetyl-alpha-D-muramoyl-L-alanyl-gamma-D-glutamyl-meso-2,6-diaminopimeloyl-D-alanyl-D-alanine + di-trans,octa-cis-undecaprenyl phosphate = di-trans,octa-cis-undecaprenyl diphospho-N-acetyl-alpha-D-muramoyl-L-alanyl-D-glutamyl-meso-2,6-diaminopimeloyl-D-alanyl-D-alanine + UMP. The protein operates within cell wall biogenesis; peptidoglycan biosynthesis. In terms of biological role, catalyzes the initial step of the lipid cycle reactions in the biosynthesis of the cell wall peptidoglycan: transfers peptidoglycan precursor phospho-MurNAc-pentapeptide from UDP-MurNAc-pentapeptide onto the lipid carrier undecaprenyl phosphate, yielding undecaprenyl-pyrophosphoryl-MurNAc-pentapeptide, known as lipid I. The chain is Phospho-N-acetylmuramoyl-pentapeptide-transferase from Methylobacterium sp. (strain 4-46).